Consider the following 248-residue polypeptide: ATP synthase subunit a, chloroplastic (248 aa).

A run of 5 helical transmembrane segments spans residues 38–58, 96–116, 135–155, 200–220, and 221–241; these read QVLITSWIVIAVLLGSATIAV, VPFIGTMFLFIFVSNWSGALL, INTTVALALLTSVAYFYAGLA, LVVAVLVSPVPLVVPIPVMFL, and GLFTSGIQALIFATLAAAYIG.

It belongs to the ATPase A chain family. In terms of assembly, F-type ATPases have 2 components, CF(1) - the catalytic core - and CF(0) - the membrane proton channel. CF(1) has five subunits: alpha(3), beta(3), gamma(1), delta(1), epsilon(1). CF(0) has four main subunits: a, b, b' and c.

Its subcellular location is the plastid. It localises to the chloroplast thylakoid membrane. Its function is as follows. Key component of the proton channel; it plays a direct role in the translocation of protons across the membrane. The polypeptide is ATP synthase subunit a, chloroplastic (Pinus koraiensis (Korean pine)).